The chain runs to 808 residues: Sucrose synthase 4 (808 aa).

Positions 277–754 (MVFNVVILSP…GLERIQEKYT (478 aa)) are GT-B glycosyltransferase.

Belongs to the glycosyltransferase 1 family. Plant sucrose synthase subfamily. In terms of tissue distribution, detected in the whole plant with highest expression in young rosette leaves and roots.

It catalyses the reaction an NDP-alpha-D-glucose + D-fructose = a ribonucleoside 5'-diphosphate + sucrose + H(+). Functionally, sucrose-cleaving enzyme that provides UDP-glucose and fructose for various metabolic pathways. The sequence is that of Sucrose synthase 4 (SUS4) from Arabidopsis thaliana (Mouse-ear cress).